The sequence spans 330 residues: Diacylglycerol acyltransferase/mycolyltransferase Ag85B (330 aa).

Residues 1–40 (MTDLSEKVRAWGRRLVVGAAAAATLPGLIGIAGGAATANA) form the signal peptide. 82–83 (LR) provides a ligand contact to substrate. Residues 98-108 (FEWYYQSGLSV) are fibronectin-binding. Cysteine 127 and cysteine 132 are oxidised to a cystine. Residues serine 166 and aspartate 194 each coordinate substrate. The active-site Nucleophile is the serine 166. Residue glutamate 270 is part of the active site. Substrate is bound by residues 272 to 275 (FVRS), lysine 279, and 302 to 304 (HSW). Histidine 302 is an active-site residue.

The protein belongs to the mycobacterial A85 antigen family.

It is found in the secreted. The enzyme catalyses 2 alpha,alpha'-trehalose 6-mycolate = alpha,alpha'-trehalose 6,6'-bismycolate + alpha,alpha-trehalose. It catalyses the reaction an acyl-CoA + a 1,2-diacyl-sn-glycerol = a triacyl-sn-glycerol + CoA. In terms of biological role, the antigen 85 proteins (FbpA, FbpB, FbpC) are responsible for the high affinity of mycobacteria for fibronectin, a large adhesive glycoprotein, which facilitates the attachment of M.tuberculosis to murine alveolar macrophages (AMs). They also help to maintain the integrity of the cell wall by catalyzing the transfer of mycolic acids to cell wall arabinogalactan and through the synthesis of alpha,alpha-trehalose dimycolate (TDM, cord factor). They catalyze the transfer of a mycoloyl residue from one molecule of alpha,alpha-trehalose monomycolate (TMM) to another TMM, leading to the formation of TDM. The chain is Diacylglycerol acyltransferase/mycolyltransferase Ag85B (fbpB) from Mycobacterium intracellulare (strain ATCC 13950 / DSM 43223 / JCM 6384 / NCTC 13025 / 3600).